Consider the following 153-residue polypeptide: Aspartate carbamoyltransferase regulatory chain (153 aa).

Zn(2+) is bound by residues Cys109, Cys114, Cys138, and Cys141.

Belongs to the PyrI family. Contains catalytic and regulatory chains. Zn(2+) serves as cofactor.

Functionally, involved in allosteric regulation of aspartate carbamoyltransferase. This Wigglesworthia glossinidia brevipalpis protein is Aspartate carbamoyltransferase regulatory chain.